The following is a 199-amino-acid chain: Riboflavin synthase (199 aa).

2 Lumazine-binding repeats span residues 1 to 95 and 96 to 188; these read MFSG…IGGH and FVSG…VDTI. 2,4-dihydroxypteridine is bound by residues 4-6, 46-48, 60-65, 99-101, Lys130, 139-141, and 153-158; these read GII, CLT, DVTEET, GHV, SLT, and SLIPET.

Homotrimer.

The catalysed reaction is 2 6,7-dimethyl-8-(1-D-ribityl)lumazine + H(+) = 5-amino-6-(D-ribitylamino)uracil + riboflavin. Its pathway is cofactor biosynthesis; riboflavin biosynthesis; riboflavin from 2-hydroxy-3-oxobutyl phosphate and 5-amino-6-(D-ribitylamino)uracil: step 2/2. Its function is as follows. Catalyzes the dismutation of two molecules of 6,7-dimethyl-8-ribityllumazine, resulting in the formation of riboflavin and 5-amino-6-(D-ribitylamino)uracil. The chain is Riboflavin synthase (ribE) from Chlamydia trachomatis serovar D (strain ATCC VR-885 / DSM 19411 / UW-3/Cx).